Consider the following 455-residue polypeptide: Glutamyl-tRNA reductase (455 aa).

Substrate-binding positions include threonine 49 to arginine 52, serine 109, glutamate 114 to glutamine 116, and glutamine 120. Cysteine 50 acts as the Nucleophile in catalysis. Residue glycine 190–glycine 195 coordinates NADP(+).

Belongs to the glutamyl-tRNA reductase family. As to quaternary structure, homodimer.

The catalysed reaction is (S)-4-amino-5-oxopentanoate + tRNA(Glu) + NADP(+) = L-glutamyl-tRNA(Glu) + NADPH + H(+). It functions in the pathway porphyrin-containing compound metabolism; protoporphyrin-IX biosynthesis; 5-aminolevulinate from L-glutamyl-tRNA(Glu): step 1/2. Catalyzes the NADPH-dependent reduction of glutamyl-tRNA(Glu) to glutamate 1-semialdehyde (GSA). The protein is Glutamyl-tRNA reductase of Salinispora arenicola (strain CNS-205).